Reading from the N-terminus, the 285-residue chain is Aquaporin-6 (285 aa).

A run of 3 helical transmembrane segments spans residues I36–C56, Y76–L96, and I105–G125. An NPA 1 motif is present at residues N86–V88. Residue N128 is glycosylated (N-linked (GlcNAc...) asparagine). 2 helical membrane-spanning segments follow: residues V143 to M163 and G177 to A197. The short motif at N206–M208 is the NPA 2 element. Residues Y225–T245 form a helical membrane-spanning segment.

The protein belongs to the MIP/aquaporin (TC 1.A.8) family.

The protein resides in the cell membrane. Its function is as follows. Probable water-specific aquaporin that may modulate the water content and osmolytes during anhydrobiosis. The protein is Aquaporin-6 of Milnesium tardigradum (Water bear).